Reading from the N-terminus, the 79-residue chain is Tungsten-containing formylmethanofuran dehydrogenase 2 subunit G (79 aa).

2 4Fe-4S ferredoxin-type domains span residues 2-31 and 51-79; these read VKIVIHEERCHGCGNCVIACPVNACNSPNV and TVSVINEDLCEACMTCELACPVDAIEIKT. Positions 11, 14, 17, 21, 60, 63, 66, and 70 each coordinate [4Fe-4S] cluster.

The cofactor is [4Fe-4S] cluster.

The catalysed reaction is N-formylmethanofuran + 2 oxidized [2Fe-2S]-[ferredoxin] + H2O = methanofuran + 2 reduced [2Fe-2S]-[ferredoxin] + CO2 + H(+). It participates in one-carbon metabolism; methanogenesis from CO(2); 5,10-methenyl-5,6,7,8-tetrahydromethanopterin from CO(2): step 1/3. Its activity is regulated as follows. Not inactivated by cyanide. Its function is as follows. Catalyzes the reversible oxidation of CO(2) and methanofuran (MFR) to N-formylmethanofuran (CHO-MFR). This enzyme is oxygen-labile. May function as an electron transfer protein. The protein is Tungsten-containing formylmethanofuran dehydrogenase 2 subunit G (fwdG) of Methanopyrus kandleri (strain AV19 / DSM 6324 / JCM 9639 / NBRC 100938).